We begin with the raw amino-acid sequence, 294 residues long: 33 kDa chaperonin (294 aa).

2 cysteine pairs are disulfide-bonded: Cys-236–Cys-238 and Cys-269–Cys-272.

The protein belongs to the HSP33 family. Under oxidizing conditions two disulfide bonds are formed involving the reactive cysteines. Under reducing conditions zinc is bound to the reactive cysteines and the protein is inactive.

Its subcellular location is the cytoplasm. Redox regulated molecular chaperone. Protects both thermally unfolding and oxidatively damaged proteins from irreversible aggregation. Plays an important role in the bacterial defense system toward oxidative stress. The chain is 33 kDa chaperonin from Desulforamulus reducens (strain ATCC BAA-1160 / DSM 100696 / MI-1) (Desulfotomaculum reducens).